The following is a 470-amino-acid chain: MHDIKAIRDNPAAFDAALKRRGLAPLSSSLLAIDEKRRAAILASEQAQARRNAASKEIGEAKKAKDEARAAKLMAEVAELKTSMPEMDAAAKAADEKLRKALAEIPNLPLDEVPDGTDEHGNIQHHVFGKKRDYAFTPKPHEDLGGALGDMDFEAAAKLSGARFVVLKRGLARLERAIGQFFLDVHTGEHGYTEVNPPLLVRDDAMFGTAQLPKFAEDQFDFIKDRTISEQLEQTVVEIDQRKVRPGHFDMEQKVTPLSAPTRKDRLWLIPTAEVPLTNLVRESILDEKELPLRFTALTPCFRAEAGAAGRDTRGMIRQHQFTKVELVSITTPETSKDEHERMLSCAEEVLRRLDLHYRVMTLCTGDMGFASQKTYDIEVWMPGQGEGGAYREISSCSVCGDFQARRMDARSRGPDGKPRFVHTLNGSGTAVGRALIAVMETYQQADGSIAVPDVLLPYMGGLKVIAKGL.

272 to 274 (TAE) is an L-serine binding site. 303–305 (RAE) contacts ATP. L-serine is bound at residue glutamate 326. Residue 393 to 396 (EISS) participates in ATP binding. Residue serine 428 coordinates L-serine.

It belongs to the class-II aminoacyl-tRNA synthetase family. Type-1 seryl-tRNA synthetase subfamily. As to quaternary structure, homodimer. The tRNA molecule binds across the dimer.

The protein localises to the cytoplasm. The enzyme catalyses tRNA(Ser) + L-serine + ATP = L-seryl-tRNA(Ser) + AMP + diphosphate + H(+). It carries out the reaction tRNA(Sec) + L-serine + ATP = L-seryl-tRNA(Sec) + AMP + diphosphate + H(+). It functions in the pathway aminoacyl-tRNA biosynthesis; selenocysteinyl-tRNA(Sec) biosynthesis; L-seryl-tRNA(Sec) from L-serine and tRNA(Sec): step 1/1. Catalyzes the attachment of serine to tRNA(Ser). Is also able to aminoacylate tRNA(Sec) with serine, to form the misacylated tRNA L-seryl-tRNA(Sec), which will be further converted into selenocysteinyl-tRNA(Sec). This chain is Serine--tRNA ligase, found in Nitrobacter hamburgensis (strain DSM 10229 / NCIMB 13809 / X14).